The sequence spans 258 residues: (7aS)-7a-methyl-1,5-dioxo-2,3,5,6,7,7a-hexahydro-1H-indene-carboxyl-CoA hydrolase (258 aa).

It belongs to the enoyl-CoA hydratase/isomerase family.

It catalyses the reaction (7aS)-7a-methyl-1,5-dioxo-2,3,5,6,7,7a-hexahydro-1H-indene-carboxyl-CoA + H2O = (3E)-2-(2-carboxylatoethyl)-3-methyl-6-oxocyclohex-1-ene-1-carboxyl-CoA + H(+). It participates in steroid metabolism; cholesterol degradation. In terms of biological role, involved in the final steps of cholesterol and steroid degradation. Catalyzes the hydrolytic ring D opening of (7aS)-7a-methyl-1,5-dioxo-2,3,5,6,7,7a-hexahydro-1H-indene-carboxyl-CoA (HIEC-CoA) to (3E)-2-(2-carboxylatoethyl)-3-methyl-6-oxocyclohex-1-ene-1-carboxyl-CoA (COCHEA-CoA). The polypeptide is (7aS)-7a-methyl-1,5-dioxo-2,3,5,6,7,7a-hexahydro-1H-indene-carboxyl-CoA hydrolase (Rhodococcus jostii (strain RHA1)).